A 79-amino-acid polypeptide reads, in one-letter code: Defensin-like protein 109 (79 aa).

Residues 1 to 24 form the signal peptide; that stretch reads MDFTKKILVVFAFTIMLGISSVHC. Disulfide bonds link Cys41–Cys76, Cys47–Cys68, Cys54–Cys74, and Cys58–Cys75.

It belongs to the DEFL family.

Its subcellular location is the secreted. The polypeptide is Defensin-like protein 109 (Arabidopsis thaliana (Mouse-ear cress)).